Reading from the N-terminus, the 326-residue chain is Trans-L-3-hydroxyproline dehydratase (326 aa).

Cysteine 80 acts as the Proton acceptor in catalysis. Residues 81 to 82 (GH), aspartate 241, and 246 to 247 (GS) contribute to the substrate site.

Belongs to the proline racemase family. In terms of assembly, homodimer.

The enzyme catalyses trans-3-hydroxy-L-proline = 1-pyrroline-2-carboxylate + H2O. Its function is as follows. Catalyzes the dehydration of trans-3-hydroxy-L-proline to delta-1-pyrroline-2-carboxylate (Pyr2C). The protein is Trans-L-3-hydroxyproline dehydratase (l3hypdh) of Saccoglossus kowalevskii (Acorn worm).